Consider the following 478-residue polypeptide: Chromosomal replication initiator protein DnaA (478 aa).

Positions 1–82 (MHTMNKTAES…ELGKNAKLLY (82 aa)) are domain I, interacts with DnaA modulators. The interval 82-140 (YKIKMENTYGNKLPFTEQLPSAHRSPVRTQEIDVPVQQKNPELRNPFIIPGIRNLKIES) is domain II. Residues 141–358 (QLNANYSFDN…GAIISLIAQS (218 aa)) form a domain III, AAA+ region region. ATP-binding residues include G186, G188, K189, and T190. Residues 359-478 (SFNKKEVTLE…VDDINKKLSL (120 aa)) form a domain IV, binds dsDNA region.

This sequence belongs to the DnaA family. Oligomerizes as a right-handed, spiral filament on DNA at oriC.

It localises to the cytoplasm. Functionally, plays an essential role in the initiation and regulation of chromosomal replication. ATP-DnaA binds to the origin of replication (oriC) to initiate formation of the DNA replication initiation complex once per cell cycle. Binds the DnaA box (a 9 base pair repeat at the origin) and separates the double-stranded (ds)DNA. Forms a right-handed helical filament on oriC DNA; dsDNA binds to the exterior of the filament while single-stranded (ss)DNA is stabiized in the filament's interior. The ATP-DnaA-oriC complex binds and stabilizes one strand of the AT-rich DNA unwinding element (DUE), permitting loading of DNA polymerase. After initiation quickly degrades to an ADP-DnaA complex that is not apt for DNA replication. Binds acidic phospholipids. The chain is Chromosomal replication initiator protein DnaA from Flavobacterium psychrophilum (strain ATCC 49511 / DSM 21280 / CIP 103535 / JIP02/86).